We begin with the raw amino-acid sequence, 379 residues long: Putative 8-amino-7-oxononanoate synthase (379 aa).

Arginine 21 is a substrate binding site. Pyridoxal 5'-phosphate is bound at residue 97–98; sequence GY. Histidine 122 serves as a coordination point for substrate. Pyridoxal 5'-phosphate contacts are provided by residues serine 169, 194–197, and 223–226; these read DDAH and TLSK. The residue at position 226 (lysine 226) is an N6-(pyridoxal phosphate)lysine. Threonine 340 contacts substrate.

Belongs to the class-II pyridoxal-phosphate-dependent aminotransferase family. BioF subfamily. In terms of assembly, homodimer. Pyridoxal 5'-phosphate serves as cofactor.

The enzyme catalyses 6-carboxyhexanoyl-[ACP] + L-alanine + H(+) = (8S)-8-amino-7-oxononanoate + holo-[ACP] + CO2. The protein operates within cofactor biosynthesis; biotin biosynthesis. Catalyzes the decarboxylative condensation of pimeloyl-[acyl-carrier protein] and L-alanine to produce 8-amino-7-oxononanoate (AON), [acyl-carrier protein], and carbon dioxide. The chain is Putative 8-amino-7-oxononanoate synthase (bioF) from Bacillus licheniformis (strain ATCC 14580 / DSM 13 / JCM 2505 / CCUG 7422 / NBRC 12200 / NCIMB 9375 / NCTC 10341 / NRRL NRS-1264 / Gibson 46).